A 221-amino-acid chain; its full sequence is uncharacterized protein (221 aa).

2 stretches are compositionally biased toward low complexity: residues 1 to 27 (MNNN…NNNN) and 140 to 162 (TTTS…NSSS). Disordered regions lie at residues 1 to 28 (MNNN…NNNE) and 140 to 205 (TTTS…NIGG).

This is an uncharacterized protein from Dictyostelium discoideum (Social amoeba).